The chain runs to 336 residues: Isopentenyl-diphosphate delta-isomerase (336 aa).

5-6 provides a ligand contact to substrate; the sequence is RK. FMN-binding positions include 60–62, Ser-90, and Asn-117; that span reads AMT. Gln-147 contacts substrate. Residue Glu-148 coordinates Mg(2+). FMN contacts are provided by residues Lys-179, Ser-204, Thr-209, 253–255, and 274–275; these read GVR and SR.

This sequence belongs to the IPP isomerase type 2 family. As to quaternary structure, homooctamer. Dimer of tetramers. Requires FMN as cofactor. NADPH is required as a cofactor. Mg(2+) serves as cofactor.

The protein localises to the cytoplasm. It carries out the reaction isopentenyl diphosphate = dimethylallyl diphosphate. Functionally, involved in the biosynthesis of isoprenoids. Catalyzes the 1,3-allylic rearrangement of the homoallylic substrate isopentenyl (IPP) to its allylic isomer, dimethylallyl diphosphate (DMAPP). This is Isopentenyl-diphosphate delta-isomerase from Streptococcus pneumoniae (strain ATCC BAA-255 / R6).